The chain runs to 882 residues: Translation initiation factor IF-2 (882 aa).

Composition is skewed to polar residues over residues Asn-38–Ser-56, Gly-97–Asn-124, and Gly-140–Ser-192. Disordered regions lie at residues Asn-38–Ser-192 and Ser-236–Glu-274. A compositionally biased stretch (basic and acidic residues) spans Glu-243–Gln-259. The region spanning Glu-380–Ser-553 is the tr-type G domain. Positions Gly-389–Thr-396 are G1. Gly-389–Thr-396 lines the GTP pocket. The G2 stretch occupies residues Gly-414–His-418. The tract at residues Asp-435–Gly-438 is G3. GTP is bound by residues Asp-435–His-439 and Asn-489–Asp-492. Residues Asn-489 to Asp-492 form a G4 region. Residues Ser-525–Leu-527 form a G5 region.

Belongs to the TRAFAC class translation factor GTPase superfamily. Classic translation factor GTPase family. IF-2 subfamily.

Its subcellular location is the cytoplasm. Functionally, one of the essential components for the initiation of protein synthesis. Protects formylmethionyl-tRNA from spontaneous hydrolysis and promotes its binding to the 30S ribosomal subunits. Also involved in the hydrolysis of GTP during the formation of the 70S ribosomal complex. The sequence is that of Translation initiation factor IF-2 (infB) from Borreliella burgdorferi (strain ATCC 35210 / DSM 4680 / CIP 102532 / B31) (Borrelia burgdorferi).